A 98-amino-acid polypeptide reads, in one-letter code: uncharacterized protein (98 aa).

This sequence belongs to the YciI family. Homodimer.

This is an uncharacterized protein from Haemophilus influenzae (strain ATCC 51907 / DSM 11121 / KW20 / Rd).